Consider the following 336-residue polypeptide: Transmembrane protein 19 (336 aa).

Helical transmembrane passes span 15–35 (MITN…FWII), 49–69 (ISPW…SNGL), 84–104 (VVGF…LMFF), 218–238 (VTVV…IAYF), 257–277 (IIAF…YLGA), and 313–333 (VNLF…WGFW).

The protein belongs to the TMEM19 family.

The protein localises to the membrane. This is Transmembrane protein 19 (TMEM19) from Homo sapiens (Human).